The sequence spans 293 residues: 4-hydroxy-tetrahydrodipicolinate synthase 1 (293 aa).

T46 contacts pyruvate. The active-site Proton donor/acceptor is the Y134. The Schiff-base intermediate with substrate role is filled by K162. I204 contacts pyruvate.

Belongs to the DapA family. Homotetramer; dimer of dimers.

The protein resides in the cytoplasm. The enzyme catalyses L-aspartate 4-semialdehyde + pyruvate = (2S,4S)-4-hydroxy-2,3,4,5-tetrahydrodipicolinate + H2O + H(+). It functions in the pathway amino-acid biosynthesis; L-lysine biosynthesis via DAP pathway; (S)-tetrahydrodipicolinate from L-aspartate: step 3/4. Catalyzes the condensation of (S)-aspartate-beta-semialdehyde [(S)-ASA] and pyruvate to 4-hydroxy-tetrahydrodipicolinate (HTPA). The protein is 4-hydroxy-tetrahydrodipicolinate synthase 1 of Clostridium acetobutylicum (strain ATCC 824 / DSM 792 / JCM 1419 / IAM 19013 / LMG 5710 / NBRC 13948 / NRRL B-527 / VKM B-1787 / 2291 / W).